The chain runs to 161 residues: Gamma-glutamylaminecyclotransferase A (161 aa).

26–29 contributes to the substrate binding site; sequence YGTL. Residue glutamate 101 is the Proton acceptor of the active site.

Belongs to the gamma-glutamylcyclotransferase family.

It carries out the reaction epsilon-(gamma-L-glutamyl)-L-lysine = 5-oxo-L-proline + L-lysine. May contribute to degradation of proteins cross-linked by transglutaminases by degrading the cross-link between a lysine and a glutamic acid residue. Catalyzes the formation of 5-oxo-L-proline from L-gamma-glutamyl-L-epsilon-lysine. This is Gamma-glutamylaminecyclotransferase A (ggact.1) from Danio rerio (Zebrafish).